Consider the following 227-residue polypeptide: Cytochrome c oxidase subunit 2 (227 aa).

Residues 1 to 14 (MAYPFQLGLQDATS) lie on the Mitochondrial intermembrane side of the membrane. Residues 15–45 (PIMEELMNFHDHTLMIVFLISSLVLYIISLM) traverse the membrane as a helical segment. At 46–59 (LTTKLTHTSTMDAQ) the chain is on the mitochondrial matrix side. Residues 60 to 87 (EVETIWTILPAVILILIALPSLRILYMM) form a helical membrane-spanning segment. Residues 88–227 (DEINNPVLTV…NFENWSTSMI (140 aa)) are Mitochondrial intermembrane-facing. The Cu cation site is built by His161, Cys196, Glu198, Cys200, His204, and Met207. Mg(2+) is bound at residue Glu198.

The protein belongs to the cytochrome c oxidase subunit 2 family. As to quaternary structure, component of the cytochrome c oxidase (complex IV, CIV), a multisubunit enzyme composed of 14 subunits. The complex is composed of a catalytic core of 3 subunits MT-CO1, MT-CO2 and MT-CO3, encoded in the mitochondrial DNA, and 11 supernumerary subunits COX4I, COX5A, COX5B, COX6A, COX6B, COX6C, COX7A, COX7B, COX7C, COX8 and NDUFA4, which are encoded in the nuclear genome. The complex exists as a monomer or a dimer and forms supercomplexes (SCs) in the inner mitochondrial membrane with NADH-ubiquinone oxidoreductase (complex I, CI) and ubiquinol-cytochrome c oxidoreductase (cytochrome b-c1 complex, complex III, CIII), resulting in different assemblies (supercomplex SCI(1)III(2)IV(1) and megacomplex MCI(2)III(2)IV(2)). Found in a complex with TMEM177, COA6, COX18, COX20, SCO1 and SCO2. Interacts with TMEM177 in a COX20-dependent manner. Interacts with COX20. Interacts with COX16. Cu cation serves as cofactor.

The protein localises to the mitochondrion inner membrane. It catalyses the reaction 4 Fe(II)-[cytochrome c] + O2 + 8 H(+)(in) = 4 Fe(III)-[cytochrome c] + 2 H2O + 4 H(+)(out). Functionally, component of the cytochrome c oxidase, the last enzyme in the mitochondrial electron transport chain which drives oxidative phosphorylation. The respiratory chain contains 3 multisubunit complexes succinate dehydrogenase (complex II, CII), ubiquinol-cytochrome c oxidoreductase (cytochrome b-c1 complex, complex III, CIII) and cytochrome c oxidase (complex IV, CIV), that cooperate to transfer electrons derived from NADH and succinate to molecular oxygen, creating an electrochemical gradient over the inner membrane that drives transmembrane transport and the ATP synthase. Cytochrome c oxidase is the component of the respiratory chain that catalyzes the reduction of oxygen to water. Electrons originating from reduced cytochrome c in the intermembrane space (IMS) are transferred via the dinuclear copper A center (CU(A)) of subunit 2 and heme A of subunit 1 to the active site in subunit 1, a binuclear center (BNC) formed by heme A3 and copper B (CU(B)). The BNC reduces molecular oxygen to 2 water molecules using 4 electrons from cytochrome c in the IMS and 4 protons from the mitochondrial matrix. The chain is Cytochrome c oxidase subunit 2 (MT-CO2) from Apodemus mystacinus (Broad-toothed field mouse).